A 208-amino-acid chain; its full sequence is Small ribosomal subunit protein uS4 (208 aa).

Positions 98–161 (RRLDNVVYRL…RKSKRFKEVF (64 aa)) constitute an S4 RNA-binding domain.

It belongs to the universal ribosomal protein uS4 family. As to quaternary structure, part of the 30S ribosomal subunit. Contacts protein S5. The interaction surface between S4 and S5 is involved in control of translational fidelity.

One of the primary rRNA binding proteins, it binds directly to 16S rRNA where it nucleates assembly of the body of the 30S subunit. Functionally, with S5 and S12 plays an important role in translational accuracy. This Halothermothrix orenii (strain H 168 / OCM 544 / DSM 9562) protein is Small ribosomal subunit protein uS4.